The chain runs to 512 residues: ATP synthase subunit alpha (512 aa).

169-176 (GDRQTGKT) contacts ATP.

This sequence belongs to the ATPase alpha/beta chains family. In terms of assembly, F-type ATPases have 2 components, CF(1) - the catalytic core - and CF(0) - the membrane proton channel. CF(1) has five subunits: alpha(3), beta(3), gamma(1), delta(1), epsilon(1). CF(0) has three main subunits: a(1), b(2) and c(9-12). The alpha and beta chains form an alternating ring which encloses part of the gamma chain. CF(1) is attached to CF(0) by a central stalk formed by the gamma and epsilon chains, while a peripheral stalk is formed by the delta and b chains.

The protein resides in the cell membrane. It catalyses the reaction ATP + H2O + 4 H(+)(in) = ADP + phosphate + 5 H(+)(out). Its function is as follows. Produces ATP from ADP in the presence of a proton gradient across the membrane. The alpha chain is a regulatory subunit. The polypeptide is ATP synthase subunit alpha (Elusimicrobium minutum (strain Pei191)).